A 1300-amino-acid chain; its full sequence is Insulin receptor-related protein (1300 aa).

Positions 1–26 (MARPKLWPWGILLLVSLLSAGFNLDT) are cleaved as a signal peptide. Asn47 carries an N-linked (GlcNAc...) asparagine glycan. 9 disulfides stabilise this stretch: Cys214/Cys222, Cys216/Cys228, Cys229/Cys237, Cys233/Cys246, Cys249/Cys258, Cys262/Cys274, Cys280/Cys300, Cys304/Cys317, and Cys320/Cys324. Asn311 carries N-linked (GlcNAc...) asparagine glycosylation. N-linked (GlcNAc...) asparagine glycosylation is found at Asn411, Asn492, Asn528, Asn616, Asn634, Asn756, Asn885, and Asn898. 2 Fibronectin type-III domains span residues 483–603 (QTRT…TLPA) and 607–707 (VPQD…AQEA). A disulfide bridge links Cys657 with Cys864. The disordered stretch occupies residues 740–762 (DAGRHRRAIGSPRPGGNSSDFEI). The Extracellular portion of the chain corresponds to 747–921 (AIGSPRPGGN…PEEEDSGGLH (175 aa)). Residues 818–912 (IPGKLSWEAA…DSVAFYIPGP (95 aa)) enclose the Fibronectin type-III 3 domain. Residues 922-943 (ILLTVTPAGLMLLIILAALGFF) form a helical membrane-spanning segment. Residues 944–1300 (YSRKRNGTLY…CSLQNGGPEH (357 aa)) lie on the Cytoplasmic side of the membrane. The Protein kinase domain maps to 979–1254 (ISIIRELGQG…SIQKELRPSF (276 aa)). Residues 985–993 (LGQGSFGMV) and Lys1013 each bind ATP. The active-site Proton acceptor is Asp1115. A phosphotyrosine; by autocatalysis mark is found at Tyr1145 and Tyr1146. Residues 1270-1300 (GLQPTTDAESSSPPTSKGASDCSLQNGGPEH) are disordered. A compositionally biased stretch (polar residues) spans 1272 to 1300 (QPTTDAESSSPPTSKGASDCSLQNGGPEH).

This sequence belongs to the protein kinase superfamily. Tyr protein kinase family. Insulin receptor subfamily. Probable tetramer of 2 alpha and 2 beta chains linked by disulfide bonds. The alpha chains contribute to the formation of the ligand-binding domain, while the beta chains carry the kinase domain. In terms of processing, autophosphorylated on tyrosine residues between pH 7.9 and pH 10.5.

The protein localises to the membrane. The enzyme catalyses L-tyrosyl-[protein] + ATP = O-phospho-L-tyrosyl-[protein] + ADP + H(+). In terms of biological role, receptor with tyrosine-protein kinase activity. Functions as a pH sensing receptor which is activated by increased extracellular pH. Activates an intracellular signaling pathway that involves IRS1 and AKT1/PKB. The chain is Insulin receptor-related protein (INSRR) from Cavia porcellus (Guinea pig).